Here is a 916-residue protein sequence, read N- to C-terminus: Oxysterol-binding protein 2 (916 aa).

3 disordered regions span residues 1-20, 34-121, and 139-163; these read MGKA…SRGL, TAAP…PFTK, and PESG…TPLG. A compositionally biased stretch (pro residues) spans 49 to 58; that stretch reads EPKPQPQPVP. Residues 79-92 show a composition bias toward low complexity; the sequence is RSEPVSETTSEPEP. A compositionally biased stretch (polar residues) spans 99 to 113; it reads ELLQGSRPGSESSSG. Over residues 144–155 the composition is skewed to low complexity; sequence LPALKPLPLLRP. The PH domain maps to 182-274; sequence LDSFEGWLLK…WITALELAKA (93 aa). 2 disordered regions span residues 282–301 and 417–448; these read THSD…DKSE and FHSA…EEDE. The residue at position 287 (Ser-287) is a Phosphoserine. Phosphoserine is present on Ser-763. The segment at 813-842 is disordered; the sequence is EGVAPTDSRLRPDQRLMEKGRWDEANTEKQ.

The protein belongs to the OSBP family. In terms of assembly, interacts with CCDC159. As to expression, expressed mainly in retina, testis, and fetal liver.

The protein resides in the membrane. It is found in the cytoplasmic vesicle. Its subcellular location is the secretory vesicle. It localises to the acrosome. Binds 7-ketocholesterol. Acts during spermatid development where its function is required prior to the removal of cytoplasm from the sperm head. The protein is Oxysterol-binding protein 2 (OSBP2) of Homo sapiens (Human).